The chain runs to 312 residues: tRNA pseudouridine synthase B (312 aa).

The active-site Nucleophile is aspartate 38.

It belongs to the pseudouridine synthase TruB family. Type 1 subfamily.

It catalyses the reaction uridine(55) in tRNA = pseudouridine(55) in tRNA. Functionally, responsible for synthesis of pseudouridine from uracil-55 in the psi GC loop of transfer RNAs. This chain is tRNA pseudouridine synthase B, found in Syntrophus aciditrophicus (strain SB).